Consider the following 426-residue polypeptide: 3-phosphoshikimate 1-carboxyvinyltransferase (426 aa).

The 3-phosphoshikimate site is built by Lys-22, Ser-23, and Arg-27. Residue Lys-22 coordinates phosphoenolpyruvate. Residues Gly-96 and Arg-124 each coordinate phosphoenolpyruvate. Residues Ser-170, Ser-171, Gln-172, Ser-198, Asp-314, Asn-337, and Lys-341 each contribute to the 3-phosphoshikimate site. Gln-172 provides a ligand contact to phosphoenolpyruvate. Residue Asp-314 is the Proton acceptor of the active site. Residues Arg-345, Arg-387, and Lys-412 each coordinate phosphoenolpyruvate.

This sequence belongs to the EPSP synthase family. Monomer.

The protein localises to the cytoplasm. It carries out the reaction 3-phosphoshikimate + phosphoenolpyruvate = 5-O-(1-carboxyvinyl)-3-phosphoshikimate + phosphate. Its pathway is metabolic intermediate biosynthesis; chorismate biosynthesis; chorismate from D-erythrose 4-phosphate and phosphoenolpyruvate: step 6/7. Functionally, catalyzes the transfer of the enolpyruvyl moiety of phosphoenolpyruvate (PEP) to the 5-hydroxyl of shikimate-3-phosphate (S3P) to produce enolpyruvyl shikimate-3-phosphate and inorganic phosphate. The sequence is that of 3-phosphoshikimate 1-carboxyvinyltransferase from Shewanella baltica (strain OS195).